The primary structure comprises 1360 residues: DNA mismatch repair protein Msh6 (1360 aa).

The interval 1 to 84 (MSRQSTLYSF…GLRRSVAPAA (84 aa)) is disordered. Phosphoserine occurs at positions 14, 41, and 43. Over residues 33–51 (RAAAAPGASPSPGGDAAWS) the composition is skewed to low complexity. The residue at position 70 (K70) is an N6-acetyllysine. S79, S91, S137, S200, S219, and S227 each carry phosphoserine. One can recognise a PWWP domain in the interval 92–154 (PGDLVWAKME…KRLLKPYTGS (63 aa)). The tract at residues 195–362 (VCDEPSEPEE…SGGGDDSSRP (168 aa)) is disordered. Composition is skewed to acidic residues over residues 198–209 (EPSEPEEEEEME) and 219–230 (SEEDNEIESEEE). The segment covering 240–249 (RSSRQIKKRR) has biased composition (basic residues). Residues S252, S254, S256, and S261 each carry the phosphoserine modification. The span at 263–273 (VEFKPDTKEEG) shows a compositional bias: basic and acidic residues. T269 is subject to Phosphothreonine. Phosphoserine is present on residues S274, S275, S279, S280, and S309. A compositionally biased stretch (polar residues) spans 320 to 351 (PSATKQATSISSETKNTLRAFSAPQNSESQAH). T488 carries the phosphothreonine modification. K504 carries the N6-acetyllysine modification. Residues S830 and S935 each carry the phosphoserine modification. At T1010 the chain carries Phosphothreonine. Residue 1134–1141 (GPNMGGKS) coordinates ATP.

Belongs to the DNA mismatch repair MutS family. Component of the DNA mismatch repair (MMR) complex composed at least of MSH2, MSH3, MSH6, PMS1 and MLH1. Heterodimer consisting of MSH2-MSH6 (MutS alpha). Forms a ternary complex with MutL alpha (MLH1-PMS1). Interacts with MCM9. Part of the BRCA1-associated genome surveillance complex (BASC), which contains BRCA1, MSH2, MSH6, MLH1, ATM, BLM, PMS2 and the RAD50-MRE11-NBS1 protein complex. This association could be a dynamic process changing throughout the cell cycle and within subnuclear domains. As to quaternary structure, (Microbial infection) Interacts with herpes simplex virus 1 protein UL12. Post-translationally, the N-terminus is blocked. In terms of processing, phosphorylated by PRKCZ, which may prevent MutS alpha degradation by the ubiquitin-proteasome pathway.

It is found in the nucleus. It localises to the chromosome. In terms of biological role, component of the post-replicative DNA mismatch repair system (MMR). Heterodimerizes with MSH2 to form MutS alpha, which binds to DNA mismatches thereby initiating DNA repair. When bound, MutS alpha bends the DNA helix and shields approximately 20 base pairs, and recognizes single base mismatches and dinucleotide insertion-deletion loops (IDL) in the DNA. After mismatch binding, forms a ternary complex with the MutL alpha heterodimer, which is thought to be responsible for directing the downstream MMR events, including strand discrimination, excision, and resynthesis. ATP binding and hydrolysis play a pivotal role in mismatch repair functions. The ATPase activity associated with MutS alpha regulates binding similar to a molecular switch: mismatched DNA provokes ADP--&gt;ATP exchange, resulting in a discernible conformational transition that converts MutS alpha into a sliding clamp capable of hydrolysis-independent diffusion along the DNA backbone. This transition is crucial for mismatch repair. MutS alpha may also play a role in DNA homologous recombination repair. Recruited on chromatin in G1 and early S phase via its PWWP domain that specifically binds trimethylated 'Lys-36' of histone H3 (H3K36me3): early recruitment to chromatin to be replicated allowing a quick identification of mismatch repair to initiate the DNA mismatch repair reaction. The chain is DNA mismatch repair protein Msh6 from Homo sapiens (Human).